The chain runs to 258 residues: Hydroxyacylglutathione hydrolase (258 aa).

Zn(2+) contacts are provided by histidine 54, histidine 56, aspartate 58, histidine 59, histidine 113, aspartate 138, and histidine 176.

It belongs to the metallo-beta-lactamase superfamily. Glyoxalase II family. As to quaternary structure, monomer. The cofactor is Zn(2+).

The catalysed reaction is an S-(2-hydroxyacyl)glutathione + H2O = a 2-hydroxy carboxylate + glutathione + H(+). Its pathway is secondary metabolite metabolism; methylglyoxal degradation; (R)-lactate from methylglyoxal: step 2/2. Functionally, thiolesterase that catalyzes the hydrolysis of S-D-lactoyl-glutathione to form glutathione and D-lactic acid. The chain is Hydroxyacylglutathione hydrolase from Synechococcus sp. (strain ATCC 27144 / PCC 6301 / SAUG 1402/1) (Anacystis nidulans).